The following is a 607-amino-acid chain: Pescadillo homolog (607 aa).

Residues 301-341 are disordered; that stretch reads ANVVEQSEKTTEDADEEPETEENLDEFKPADGADNEDSKSL. Positions 313-324 are enriched in acidic residues; that stretch reads DADEEPETEENL. The segment covering 325–339 has biased composition (basic and acidic residues); the sequence is DEFKPADGADNEDSK. The BRCT domain maps to 348–441; that stretch reads SNTSLFSNFT…ILERTDLYAC (94 aa). The stretch at 497 to 604 forms a coiled coil; that stretch reads ENVEQIDDAE…RDIEKRKKLK (108 aa). The tract at residues 531–607 is disordered; it reads QNSKSAKKTK…EKRKKLKVEN (77 aa). Composition is skewed to basic and acidic residues over residues 544-561 and 595-607; these read RDTL…KELS and RDIE…KVEN.

The protein belongs to the pescadillo family. Component of the NOP7 complex, composed of erb1/SPBC4F6.13c, ppp1/SPBC19F5.05c and ytm1/SPAC890.04c. Within the NOP7 complex erb1/SPBC4F6.13c appears to interact directly with ppp1/SPBC19F5.05c and ytm1/SPAC890.04c. The NOP7 complex also associates with the 66S pre-ribosome.

The protein localises to the nucleus. Its subcellular location is the nucleoplasm. The protein resides in the nucleolus. Functionally, component of the NOP7 complex, which is required for maturation of the 25S and 5.8S ribosomal RNAs and formation of the 60S ribosome. The polypeptide is Pescadillo homolog (ppp1) (Schizosaccharomyces pombe (strain 972 / ATCC 24843) (Fission yeast)).